The sequence spans 340 residues: Manganese-dependent ADP-ribose/CDP-alcohol diphosphatase (340 aa).

Met1 carries the N-acetylmethionine modification. Zn(2+) is bound by residues Asp25, Gln27, Asp74, Asn110, His241, His278, and His280.

Belongs to the ADPRibase-Mn family. As to quaternary structure, monomer. Mg(2+) is required as a cofactor.

The enzyme catalyses CDP-choline + H2O = phosphocholine + CMP + 2 H(+). It catalyses the reaction ADP-D-ribose + H2O = D-ribose 5-phosphate + AMP + 2 H(+). The catalysed reaction is CDP-glycerol + H2O = sn-glycerol 3-phosphate + CMP + 2 H(+). In terms of biological role, hydrolyzes ADP-ribose, IDP-ribose, CDP-glycerol, CDP-choline and CDP-ethanolamine, but not other non-reducing ADP-sugars or CDP-glucose. May be involved in immune cell signaling as suggested by the second-messenger role of ADP-ribose, which activates TRPM2 as a mediator of oxidative/nitrosative stress. The chain is Manganese-dependent ADP-ribose/CDP-alcohol diphosphatase (Adprm) from Mus musculus (Mouse).